Here is a 1856-residue protein sequence, read N- to C-terminus: DNA-directed RNA polymerase II subunit RPB1 (1856 aa).

Residues Cys66, Cys69, Cys76, His79, Cys106, Cys109, Cys149, and Cys177 each coordinate Zn(2+). The lid loop stretch occupies residues 256–268 (PAVVTFGSAKNQD). The interval 314–331 (NCIPGLPTATQKGGRPLK) is rudder loop. Mg(2+) contacts are provided by Asp489, Asp491, and Asp493. The segment at 827 to 839 (PSEFFFHAMGGRE) is bridging helix. Residue Lys1260 forms a Glycyl lysine isopeptide (Lys-Gly) (interchain with G-Cter in ubiquitin) linkage. Residues 1523 to 1856 (PTTGGMSPGA…PSSPTYDPNS (334 aa)) are disordered. The segment covering 1587–1856 (SMTSPHYSPT…PSSPTYDPNS (270 aa)) has biased composition (low complexity). 27 repeat units span residues 1593–1599 (YSPTSPS), 1600–1606 (YSPTSPA), 1616–1622 (YSPTSPS), 1623–1629 (YSPTSPS), 1630–1636 (YSPTSPS), 1637–1643 (YSPTSPS), 1644–1650 (YSPTSPS), 1651–1657 (YSPTSPS), 1658–1664 (YSPSSPS), 1665–1671 (YSPSSPS), 1672–1678 (YSPSSPR), 1679–1685 (YSPTSPT), 1686–1692 (YSPTSPT), 1693–1699 (YSPTSPT), 1700–1706 (YSPTSPT), 1707–1713 (YSPTSPS), 1720–1726 (YSPSSPK), 1727–1733 (YSPSSPT), 1734–1740 (YSPTSPS), 1741–1747 (YSPTSPQ), 1748–1754 (YSPTSPQ), 1755–1761 (YSPSSPT), 1769–1775 (YNPTSPR), 1782–1788 (YSPTSPT), 1789–1795 (YSPTSPS), 1796–1802 (YTPSSPQ), and 1803–1809 (YSPTSPT). A C-terminal domain (CTD); 28 X 7 AA approximate tandem repeats of Y-[ST]-P-[ST]-S-P-[AGKNQRST] region spans residues 1593–1816 (YSPTSPSYSP…SPTYTPSPSE (224 aa)). The 28; approximate repeat unit spans residues 1810 to 1816 (YTPSPSE).

This sequence belongs to the RNA polymerase beta' chain family. Component of the RNA polymerase II (Pol II) complex consisting of 12 subunits. Interacts with sig-7. The tandem 7 residues repeats in the C-terminal domain (CTD) can be highly phosphorylated. The phosphorylation activates Pol II. Phosphorylation occurs mainly at residues 'Ser-2' and 'Ser-5' of the heptapeptide repeat and starts at the 3- to 4-cell embryonic stage. This phosphorylation also occurs in the early stages of oocyte development and is not detected in oocytes arrested at the meiotic diakinesis stage. In the somatic lineage, phosphorylation at 'Ser-2' is mediated by cdk-12 downstream of cdk-9 whereas in the germline lineage cdk-12 phosphorylates 'Ser-2' independently of cdk-9. Phosphorylation is likely mediated by cdk-7. May be dephosphorylated by fcp-1 in diakinetic oocytes and in 1-cell and 2-cell embryos. Dephosphorylated at 'Ser-5' of the heptapeptide repeats by ssup-72. The phosphorylation state is believed to result from the balanced action of site-specific CTD kinases and phosphatase, and a 'CTD code' that specifies the position of Pol II within the transcription cycle has been proposed. Post-translationally, following transcription stress, the elongating form of RNA polymerase II (RNA pol IIo) is polyubiquitinated via 'Lys-63'-linkages on Lys-1260 at DNA damage sites without leading to degradation: ubiquitination promotes RNA pol IIo backtracking to allow access by the transcription-coupled nucleotide excision repair (TC-NER) machinery. Subsequent DEF1-dependent polyubiquitination by the elongin complex via 'Lys-48'-linkages may lead to proteasome-mediated degradation; presumably at stalled RNA pol II where TC-NER has failed, to halt global transcription and enable 'last resort' DNA repair pathways.

It localises to the nucleus. Its subcellular location is the chromosome. It catalyses the reaction RNA(n) + a ribonucleoside 5'-triphosphate = RNA(n+1) + diphosphate. DNA-dependent RNA polymerase catalyzes the transcription of DNA into RNA using the four ribonucleoside triphosphates as substrates. Largest and catalytic component of RNA polymerase II which synthesizes mRNA precursors and many functional non-coding RNAs. Forms the polymerase active center together with the second largest subunit. Pol II is the central component of the basal RNA polymerase II transcription machinery. It is composed of mobile elements that move relative to each other. RPB1 is part of the core element with the central large cleft, the clamp element that moves to open and close the cleft and the jaws that are thought to grab the incoming DNA template. At the start of transcription, a single-stranded DNA template strand of the promoter is positioned within the central active site cleft of Pol II. A bridging helix emanates from RPB1 and crosses the cleft near the catalytic site and is thought to promote translocation of Pol II by acting as a ratchet that moves the RNA-DNA hybrid through the active site by switching from straight to bent conformations at each step of nucleotide addition. During transcription elongation, Pol II moves on the template as the transcript elongates. Elongation is influenced by the phosphorylation status of the C-terminal domain (CTD) of Pol II largest subunit (RPB1), which serves as a platform for assembly of factors that regulate transcription initiation, elongation, termination and mRNA processing. Involved in the transcription of several genes including those involved in embryogenesis. In Caenorhabditis elegans, this protein is DNA-directed RNA polymerase II subunit RPB1.